Consider the following 911-residue polypeptide: Epithelial discoidin domain-containing receptor 1 (911 aa).

Residues 1 to 19 (MGTGTLSSLLLLLLLVTIG) form the signal peptide. Residues 22 to 415 (DMKGHFDPAK…VAKAEGSPTA (394 aa)) are Extracellular-facing. The 155-residue stretch at 32 to 186 (CRYALGMQDR…VCLRVELYGC (155 aa)) folds into the F5/8 type C domain. Cystine bridges form between cysteine 32–cysteine 186 and cysteine 75–cysteine 178. The interval 193–369 (LSYTAPVGQT…LFSEISFISD (177 aa)) is DS-like domain. Asparagine 213, glutamine 232, aspartate 235, valine 237, tyrosine 255, and tyrosine 257 together coordinate Ca(2+). The N-linked (GlcNAc...) asparagine glycan is linked to asparagine 213. The N-linked (GlcNAc...) asparagine glycan is linked to asparagine 262. An intrachain disulfide couples cysteine 305 to cysteine 350. Ca(2+) is bound by residues serine 362 and glutamate 363. N-linked (GlcNAc...) asparagine glycans are attached at residues asparagine 372 and asparagine 392. The chain crosses the membrane as a helical span at residues 416–436 (ILIGCLVAIILLLLLIIALML). Over 437-911 (WRLHWRRLLS…FLADDALNTV (475 aa)) the chain is Cytoplasmic. A disordered region spans residues 468–496 (ILINNRPGPREPPPYQEPRPRGTPPHSAP). The segment covering 477-494 (REPPPYQEPRPRGTPPHS) has biased composition (pro residues). Positions 479–482 (PPPY) match the PPxY motif motif. Tyrosine 482, tyrosine 511, and tyrosine 518 each carry phosphotyrosine; by autocatalysis. The 296-residue stretch at 608–903 (LRFKEKLGEG…PPFAQLHRFL (296 aa)) folds into the Protein kinase domain. ATP is bound by residues 614–622 (LGEGQFGEV) and lysine 653. Tyrosine 738 is modified (phosphotyrosine; by autocatalysis). The active-site Proton acceptor is the aspartate 764. Phosphotyrosine; by autocatalysis is present on residues tyrosine 790, tyrosine 794, and tyrosine 795.

This sequence belongs to the protein kinase superfamily. Tyr protein kinase family. Insulin receptor subfamily. Homodimer. Interacts (via PPxY motif) with WWC1 (via WW domains) in a collagen-regulated manner. Forms a tripartite complex with WWC1 and PRKCZ, but predominantly in the absence of collagen. Interacts (tyrosine phosphorylated) with SHC1. Interacts with SRC. Interacts with MYH9. Interacts with CDH1. Interacts with PTPN11. Interacts with NCK2. In terms of processing, autophosphorylated in response to fibrillar collagen binding. In terms of tissue distribution, detected in the cochlea and the organ of Corti in the inner ear. Isoform 1 is predominant and is expressed in developing embryo and adult brain. Isoform 2 is expressed in various epithelial cells.

It is found in the cell membrane. The enzyme catalyses L-tyrosyl-[protein] + ATP = O-phospho-L-tyrosyl-[protein] + ADP + H(+). In terms of biological role, tyrosine kinase that functions as a cell surface receptor for fibrillar collagen and regulates cell attachment to the extracellular matrix, remodeling of the extracellular matrix, cell migration, differentiation, survival and cell proliferation. Collagen binding triggers a signaling pathway that involves SRC and leads to the activation of MAP kinases. Regulates remodeling of the extracellular matrix by up-regulation of the matrix metalloproteinases MMP2, MMP7 and MMP9, and thereby facilitates cell migration and wound healing, but also tumor cell invasion. Promotes smooth muscle cell migration, and thereby contributes to arterial wound healing. Phosphorylates PTPN11. Required for normal blastocyst implantation during pregnancy, for normal mammary gland differentiation and normal lactation. Required for normal ear morphology and normal hearing. The polypeptide is Epithelial discoidin domain-containing receptor 1 (Ddr1) (Mus musculus (Mouse)).